Consider the following 358-residue polypeptide: Gibberellin 2-beta-dioxygenase 6 (358 aa).

One can recognise a Fe2OG dioxygenase domain in the interval 207–308; sequence DETTCFLRLN…RLSVAYFLCP (102 aa). Y218 is a 2-oxoglutarate binding site. Fe cation contacts are provided by H233, D235, and H289. Residues R299 and S301 each contribute to the 2-oxoglutarate site.

The protein belongs to the iron/ascorbate-dependent oxidoreductase family. GA2OX subfamily. Requires L-ascorbate as cofactor. Fe(2+) serves as cofactor. As to expression, expressed in panicles. Expressed at low levels in young shoots, leaf blades and elongating internodes.

It localises to the cytoplasm. The protein resides in the nucleus. The enzyme catalyses gibberellin A1 + 2-oxoglutarate + O2 = gibberellin A8 + succinate + CO2. Its function is as follows. Catalyzes the 2-beta-hydroxylation of several biologically active gibberellins, leading to the homeostatic regulation of their endogenous level. Catabolism of gibberellins (GAs) plays a central role in plant development. In vitro, converts GA12 and GA53 to the corresponding 2-beta-hydroxylated products GA110 and GA97, respectively. This chain is Gibberellin 2-beta-dioxygenase 6, found in Oryza sativa subsp. japonica (Rice).